The chain runs to 116 residues: Large ribosomal subunit protein uL18 (116 aa).

It belongs to the universal ribosomal protein uL18 family. In terms of assembly, part of the 50S ribosomal subunit; part of the 5S rRNA/L5/L18/L25 subcomplex. Contacts the 5S and 23S rRNAs.

Functionally, this is one of the proteins that bind and probably mediate the attachment of the 5S RNA into the large ribosomal subunit, where it forms part of the central protuberance. This Pseudomonas aeruginosa (strain UCBPP-PA14) protein is Large ribosomal subunit protein uL18.